Consider the following 377-residue polypeptide: Succinyl-diaminopimelate desuccinylase (377 aa).

H68 is a binding site for Zn(2+). D70 is an active-site residue. D101 lines the Zn(2+) pocket. The active-site Proton acceptor is E135. 3 residues coordinate Zn(2+): E136, E164, and H350.

It belongs to the peptidase M20A family. DapE subfamily. As to quaternary structure, homodimer. Requires Zn(2+) as cofactor. It depends on Co(2+) as a cofactor.

It carries out the reaction N-succinyl-(2S,6S)-2,6-diaminopimelate + H2O = (2S,6S)-2,6-diaminopimelate + succinate. Its pathway is amino-acid biosynthesis; L-lysine biosynthesis via DAP pathway; LL-2,6-diaminopimelate from (S)-tetrahydrodipicolinate (succinylase route): step 3/3. Its function is as follows. Catalyzes the hydrolysis of N-succinyl-L,L-diaminopimelic acid (SDAP), forming succinate and LL-2,6-diaminopimelate (DAP), an intermediate involved in the bacterial biosynthesis of lysine and meso-diaminopimelic acid, an essential component of bacterial cell walls. This is Succinyl-diaminopimelate desuccinylase from Aliivibrio salmonicida (strain LFI1238) (Vibrio salmonicida (strain LFI1238)).